The following is a 515-amino-acid chain: Germ cell-less protein-like 1 (515 aa).

The interval 1 to 35 is disordered; that stretch reads MGSLSSRVLRQPRPALAQQAQGARAGGSARRPDTG. Low complexity predominate over residues 11–29; it reads QPRPALAQQAQGARAGGSA. The Nuclear localization signal motif lies at 49 to 55; the sequence is SHKRKRS. Residues 65–85 form a disordered region; sequence DSETDEDEEEGDEQQRLLNTP. Serine 66 is modified (phosphoserine). A compositionally biased stretch (acidic residues) spans 67–76; the sequence is ETDEDEEEGD. The residue at position 68 (threonine 68) is a Phosphothreonine. A Nuclear localization signal motif is present at residues 85 to 91; the sequence is PRRKKLK. A BTB domain is found at 108–178; it reads SDIKICALGE…LYRDDVLIKP (71 aa).

Interacts with TMPO-beta, TSG101 and TFDP2. Interacts with EMD.

Its subcellular location is the nucleus matrix. Functionally, possible function in spermatogenesis. Enhances the degradation of MDM2 and increases the amount of p53 probably by modulating the nucleocytoplasmic transport. This is Germ cell-less protein-like 1 (GMCL1) from Homo sapiens (Human).